The chain runs to 521 residues: GMP synthase [glutamine-hydrolyzing] (521 aa).

The 193-residue stretch at 5-197 (KILILDFGSQ…VLDICGAQPG (193 aa)) folds into the Glutamine amidotransferase type-1 domain. Catalysis depends on C81, which acts as the Nucleophile. Active-site residues include H171 and E173. The GMPS ATP-PPase domain occupies 198-390 (WTMPNYIEEA…LGLPREMVYR (193 aa)). 225–231 (SGGVDSS) contributes to the ATP binding site.

In terms of assembly, homodimer.

It carries out the reaction XMP + L-glutamine + ATP + H2O = GMP + L-glutamate + AMP + diphosphate + 2 H(+). The protein operates within purine metabolism; GMP biosynthesis; GMP from XMP (L-Gln route): step 1/1. In terms of biological role, catalyzes the synthesis of GMP from XMP. The chain is GMP synthase [glutamine-hydrolyzing] (guaA) from Neisseria meningitidis serogroup B (strain ATCC BAA-335 / MC58).